The chain runs to 627 residues: (R)-linalool synthase 1, chloroplastic (627 aa).

The transit peptide at 1 to 21 (MAFVSIAPLASRCCVHKSFVS) directs the protein to the chloroplast. Residues Asp-378, Asp-382, and Glu-530 each coordinate Mg(2+). The short motif at 378–382 (DDIYD) is the DDXXD motif element.

It belongs to the terpene synthase family. Tpsd subfamily. Mg(2+) is required as a cofactor. Requires Mn(2+) as cofactor.

It localises to the plastid. Its subcellular location is the chloroplast. The catalysed reaction is (2E)-geranyl diphosphate + H2O = (R)-linalool + diphosphate. It participates in terpene metabolism; oleoresin biosynthesis. Its function is as follows. Terpene synthase (TPS) involved in the biosynthesis of monoterpene natural products included in conifer oleoresin secretions and volatile emissions; these compounds contribute to biotic and abiotic stress defense against herbivores and pathogens. Catalyzes the conversion of (2E)-geranyl diphosphate (GPP) to (R)-linalool. The protein is (R)-linalool synthase 1, chloroplastic of Picea sitchensis (Sitka spruce).